A 331-amino-acid polypeptide reads, in one-letter code: Fructose-1,6-bisphosphatase class 1 2 (331 aa).

Glu91, Asp112, Leu114, and Asp115 together coordinate Mg(2+). Residues 115–118, Asn207, Tyr238, and Lys268 contribute to the substrate site; that span reads DGSS. Glu274 is a Mg(2+) binding site.

It belongs to the FBPase class 1 family. Homotetramer. It depends on Mg(2+) as a cofactor.

It localises to the cytoplasm. It catalyses the reaction beta-D-fructose 1,6-bisphosphate + H2O = beta-D-fructose 6-phosphate + phosphate. It participates in carbohydrate biosynthesis; Calvin cycle. This is Fructose-1,6-bisphosphatase class 1 2 from Acaryochloris marina (strain MBIC 11017).